The primary structure comprises 378 residues: Transcription initiation factor IIA subunit 1 (378 aa).

Ala2 bears the N-acetylalanine mark. 3 stretches are compositionally biased toward low complexity: residues 69 to 79 (QVQQQHQPQQQ), 89 to 106 (QQAQ…TQQV), and 247 to 281 (PAQA…TGDT). Disordered regions lie at residues 69–108 (QVQQ…QVLI) and 247–331 (PAQA…QELF). A phosphoserine; by TAF1 mark is found at Ser282, Ser283, Ser318, and Ser323. Over residues 282 to 331 (SSEEDEDEEEDYDDDEEEDKEKDGAEDGQVEEEPLNSEDDVSDEEGQELF) the composition is skewed to acidic residues. 2 residues coordinate DNA: His345 and Arg346.

This sequence belongs to the TFIIA subunit 1 family. In terms of assembly, TFIIA is a heterodimer of the large unprocessed subunit 1 and a small subunit gamma. It was originally believed to be a heterotrimer of an alpha (p35), a beta (p19) and a gamma subunit (p12). TFIIA forms a complex with TBP. Part of TBP-based Pol II pre-initiation complex (PIC), in which Pol II core assembles with general transcription factors and other specific initiation factors including GTF2E1, GTF2E2, GTF2F1, GTF2F2, TCEA1, ERCC2, ERCC3, GTF2H2, GTF2H3, GTF2H4, GTF2H5, GTF2A1, GTF2A2, GTF2B and TBP; this large multi-subunit PIC complex mediates DNA unwinding and targets Pol II core to the transcription start site where the first phosphodiester bond forms. In terms of processing, the alpha and beta subunits are postranslationally produced from the precursor form by TASP1. The cleavage promotes proteasomal degradation. Expressed in pachytene spermatocytes and spermatids.

The protein localises to the nucleus. In terms of biological role, TFIIA is a component of the transcription machinery of RNA polymerase II and plays an important role in transcriptional activation. TFIIA in a complex with TBP mediates transcriptional activity. The chain is Transcription initiation factor IIA subunit 1 (Gtf2a1) from Mus musculus (Mouse).